The sequence spans 330 residues: MDPTTPAWGTESTTMNGNDQALPLLCGKETLILVLLILFIALVGLVGNAFVLWLLGFRMRRNAFSVYVLSLAGADFLFLCFPMINCLEYLINFFHSISINFPSFFTTVMTCAYLAGLSMLSAISTERCLSVLWPIWYRCRRPRHLSAVLCVLLWALSLLLSILEGKFCGLLFSDGDSGWCQTFDFITAAWLMFLFVVLCGSSLALLVRILCGSQGLPLTRLYLTILLTVLIFLLCGLPFGIQWFLILWIWKNSDVLFCHIHPVSVVLSSFNSSANPIIYFFVGSFRKQWRLRQPVLKLALQRALQDTAEVDHSEGCFSQGTLEMSGSSLV.

The Extracellular portion of the chain corresponds to 1–33 (MDPTTPAWGTESTTMNGNDQALPLLCGKETLIL). Residues 34-54 (VLLILFIALVGLVGNAFVLWL) form a helical membrane-spanning segment. The Cytoplasmic portion of the chain corresponds to 55–63 (LGFRMRRNA). The helical transmembrane segment at 64–84 (FSVYVLSLAGADFLFLCFPMI) threads the bilayer. Over 85 to 96 (NCLEYLINFFHS) the chain is Extracellular. A helical membrane pass occupies residues 97–117 (ISINFPSFFTTVMTCAYLAGL). At 118 to 144 (SMLSAISTERCLSVLWPIWYRCRRPRH) the chain is on the cytoplasmic side. The helical transmembrane segment at 145–165 (LSAVLCVLLWALSLLLSILEG) threads the bilayer. The Extracellular portion of the chain corresponds to 166–184 (KFCGLLFSDGDSGWCQTFD). A helical membrane pass occupies residues 185-205 (FITAAWLMFLFVVLCGSSLAL). At 206–228 (LVRILCGSQGLPLTRLYLTILLT) the chain is on the cytoplasmic side. Residues 229–249 (VLIFLLCGLPFGIQWFLILWI) traverse the membrane as a helical segment. Residues 250-264 (WKNSDVLFCHIHPVS) are Extracellular-facing. A helical transmembrane segment spans residues 265–285 (VVLSSFNSSANPIIYFFVGSF). Residues 286 to 330 (RKQWRLRQPVLKLALQRALQDTAEVDHSEGCFSQGTLEMSGSSLV) lie on the Cytoplasmic side of the membrane.

This sequence belongs to the G-protein coupled receptor 1 family. Mas subfamily.

It is found in the cell membrane. Functionally, mast cell-specific receptor for basic secretagogues, i.e. cationic amphiphilic drugs, as well as endo- or exogenous peptides, consisting of a basic head group and a hydrophobic core. Recognizes and binds small molecules containing a cyclized tetrahydroisoquinoline (THIQ), such as non-steroidal neuromuscular blocking drugs (NMBDs), including tubocurarine and atracurium. In response to these compounds, mediates pseudo-allergic reactions characterized by histamine release, inflammation and airway contraction. The chain is Mas-related G-protein coupled receptor member X2 (MRGPRX2) from Rhinopithecus bieti (Black snub-nosed monkey).